The sequence spans 51 residues: Sperm protamine P1 (51 aa).

It belongs to the protamine P1 family. As to expression, testis.

Its subcellular location is the nucleus. It is found in the chromosome. Protamines substitute for histones in the chromatin of sperm during the haploid phase of spermatogenesis. They compact sperm DNA into a highly condensed, stable and inactive complex. In Piliocolobus badius (Western red colobus), this protein is Sperm protamine P1 (PRM1).